A 320-amino-acid polypeptide reads, in one-letter code: Lipoyl synthase (320 aa).

[4Fe-4S] cluster-binding residues include Cys67, Cys72, Cys78, Cys93, Cys97, Cys100, and Ser307. The Radical SAM core domain maps to 79–296 (FNHGTATFMI…RTKAEVMGFE (218 aa)).

The protein belongs to the radical SAM superfamily. Lipoyl synthase family. [4Fe-4S] cluster serves as cofactor.

It localises to the cytoplasm. The enzyme catalyses [[Fe-S] cluster scaffold protein carrying a second [4Fe-4S](2+) cluster] + N(6)-octanoyl-L-lysyl-[protein] + 2 oxidized [2Fe-2S]-[ferredoxin] + 2 S-adenosyl-L-methionine + 4 H(+) = [[Fe-S] cluster scaffold protein] + N(6)-[(R)-dihydrolipoyl]-L-lysyl-[protein] + 4 Fe(3+) + 2 hydrogen sulfide + 2 5'-deoxyadenosine + 2 L-methionine + 2 reduced [2Fe-2S]-[ferredoxin]. The protein operates within protein modification; protein lipoylation via endogenous pathway; protein N(6)-(lipoyl)lysine from octanoyl-[acyl-carrier-protein]: step 2/2. Catalyzes the radical-mediated insertion of two sulfur atoms into the C-6 and C-8 positions of the octanoyl moiety bound to the lipoyl domains of lipoate-dependent enzymes, thereby converting the octanoylated domains into lipoylated derivatives. This chain is Lipoyl synthase, found in Mannheimia succiniciproducens (strain KCTC 0769BP / MBEL55E).